Here is a 179-residue protein sequence, read N- to C-terminus: UPF0200 protein TV0279 (179 aa).

Residue 6–13 coordinates ATP; sequence GMPGAGKD.

The protein belongs to the UPF0200 family.

This is UPF0200 protein TV0279 from Thermoplasma volcanium (strain ATCC 51530 / DSM 4299 / JCM 9571 / NBRC 15438 / GSS1).